The chain runs to 327 residues: Ribosomal RNA small subunit methyltransferase H (327 aa).

S-adenosyl-L-methionine contacts are provided by residues 36–38 (GGH), aspartate 61, phenylalanine 88, aspartate 114, and glutamine 121.

It belongs to the methyltransferase superfamily. RsmH family.

It localises to the cytoplasm. The catalysed reaction is cytidine(1402) in 16S rRNA + S-adenosyl-L-methionine = N(4)-methylcytidine(1402) in 16S rRNA + S-adenosyl-L-homocysteine + H(+). Functionally, specifically methylates the N4 position of cytidine in position 1402 (C1402) of 16S rRNA. The protein is Ribosomal RNA small subunit methyltransferase H of Chlorobium luteolum (strain DSM 273 / BCRC 81028 / 2530) (Pelodictyon luteolum).